We begin with the raw amino-acid sequence, 289 residues long: Borealin (289 aa).

Residues 1-58 form a required for interaction with INCENP region; sequence MAPKKRSSRGTRTNTLRSRKLASFLKDFDREVQVRTKQIESDRQTLLKEVENLYNIEI. The interval 1–88 is required for centromere localization; sequence MAPKKRSSRG…NKQALEEAAK (88 aa). The interval 1–150 is required for interaction with SENP3; it reads MAPKKRSSRG…KKSHKNLRSA (150 aa). The segment at 10-109 is required to form a minimal CPC core complex that localizes to the central spindle and midbody and properly executes the role of the CPC during cytokinesis; sequence GTRTNTLRSR…TAEAIQTPLK (100 aa). Residues 20 to 78 are required for interaction with INCENP and BIRC5; it reads KLASFLKDFDREVQVRTKQIESDRQTLLKEVENLYNIEILRLPKALQGMKWLDYFALGG. Arginine 91 is subject to Citrulline. At threonine 94 the chain carries Phosphothreonine; by TTK. At threonine 106 the chain carries Phosphothreonine. Serine 110 is subject to Phosphoserine. Positions 122 to 173 are disordered; sequence SIKEEEEEEEEGGGGGGRTKKSHKNLRSAKVKRCLPSKKRTQSIQGRGRSKR. The segment covering 123–133 has biased composition (acidic residues); sequence IKEEEEEEEEG. Residues 139–162 are compositionally biased toward basic residues; it reads RTKKSHKNLRSAKVKRCLPSKKRT. Lysine 145 participates in a covalent cross-link: Glycyl lysine isopeptide (Lys-Gly) (interchain with G-Cter in SUMO2). Serine 175 is subject to Phosphoserine. Residues threonine 198 and threonine 213 each carry the phosphothreonine modification. A phosphoserine mark is found at serine 228, serine 233, serine 247, and serine 253.

The protein belongs to the borealin family. In terms of assembly, may form homooligomers and homodimers. Component of the chromosomal passenger complex (CPC) composed of at least BIRC5/survivin, CDCA8/borealin, INCENP, AURKB or AURKC; in the complex forms a triple-helix bundle-based subcomplex with INCENP and BIRC5. Interacts with SENP3, UBE2I and RANBP2. Interacts (phosphorylated) with SGO1 and SGO2A; the association is dependent on CDK1. In terms of processing, phosphorylated by TTK, essentially at Thr-94. Phosphorylation (probably by CDK1) promotes targeting of the CPC to centromeric DNA. Post-translationally, sumoylated by UBE2I and RANBP2. Desumoylated by SENP3 through the removal of SUMO2 and SUMO3. Citrullinated by PADI4.

Its subcellular location is the nucleus. The protein localises to the nucleolus. It localises to the cytoplasm. It is found in the chromosome. The protein resides in the centromere. Its subcellular location is the cytoskeleton. The protein localises to the spindle. Component of the chromosomal passenger complex (CPC), a complex that acts as a key regulator of mitosis. The CPC complex has essential functions at the centromere in ensuring correct chromosome alignment and segregation and is required for chromatin-induced microtubule stabilization and spindle assembly. In the complex, it may be required to direct the CPC to centromeric DNA. Major effector of the TTK kinase in the control of attachment-error-correction and chromosome alignment. This is Borealin (Cdca8) from Mus musculus (Mouse).